A 302-amino-acid polypeptide reads, in one-letter code: Deoxyhypusine hydroxylase (302 aa).

N-acetylmethionine is present on M1. 5 HEAT-like PBS-type repeats span residues 54 to 80 (LKHELAYCLGQMQDARAIPMLVDVLQD), 87 to 113 (VRHEAGEALGAIGDPEVLEILKQYSSD), 174 to 200 (ERYRAMFALRNAGGEEAALALAEGLHC), 205 to 231 (FRHEVGYVLGQLQHEAAVPQLAAALAR), and 238 to 264 (VRHECAEALGAIARPACLAALQAHADD). Residues H56, H89, and E90 each contribute to the Fe cation site. The Fe cation site is built by H207, H240, and E241.

It belongs to the deoxyhypusine hydroxylase family. Fe(2+) is required as a cofactor.

The enzyme catalyses [eIF5A protein]-deoxyhypusine + AH2 + O2 = [eIF5A protein]-hypusine + A + H2O. Its pathway is protein modification; eIF5A hypusination. In terms of biological role, catalyzes the hydroxylation of the N(6)-(4-aminobutyl)-L-lysine intermediate produced by deoxyhypusine synthase/DHPS on a critical lysine of the eukaryotic translation initiation factor 5A/eIF-5A. This is the second step of the post-translational modification of that lysine into an unusual amino acid residue named hypusine. Hypusination is unique to mature eIF-5A factor and is essential for its function. The chain is Deoxyhypusine hydroxylase from Homo sapiens (Human).